We begin with the raw amino-acid sequence, 98 residues long: Small ribosomal subunit protein eS24 (98 aa).

The protein belongs to the eukaryotic ribosomal protein eS24 family.

The chain is Small ribosomal subunit protein eS24 from Thermococcus sibiricus (strain DSM 12597 / MM 739).